The primary structure comprises 819 residues: Zinc finger protein 658B (819 aa).

The segment at 141–166 (YLSDEHGKCRKSFYWKAHLIQHERPH) adopts a C2H2-type 1; degenerate zinc-finger fold. 14 consecutive C2H2-type zinc fingers follow at residues 200-222 (YECN…LRIH), 278-300 (YECI…QRIH), 306-328 (YECV…QRVH), 334-356 (YECN…QRIH), 362-384 (YECS…HRIH), 390-412 (YECN…QRIH), 418-440 (YECN…QRIH), 446-468 (YECS…QRIH), 474-496 (YKCN…QNIH), 502-524 (YECS…RRIH), 530-552 (YECS…ERIH), 558-580 (YECN…QRIH), 586-608 (YECN…QRIH), and 614-636 (YECN…HRIH). The C2H2-type 16; degenerate zinc finger occupies 642 to 664 (YECNDCGKTFSKTSHLRAHLRTR). C2H2-type zinc fingers lie at residues 670 to 692 (YECS…QRVH), 698 to 720 (YECN…QRIH), 726 to 748 (YECN…QRIH), 754 to 776 (YECN…QRIH), and 782 to 805 (YECD…TRMH).

This sequence belongs to the krueppel C2H2-type zinc-finger protein family.

The protein localises to the nucleus. May be involved in transcriptional regulation. This is Zinc finger protein 658B (ZNF658B) from Homo sapiens (Human).